Consider the following 190-residue polypeptide: Isopentenyl-diphosphate Delta-isomerase (190 aa).

The Mn(2+) site is built by His27 and His34. The Nudix hydrolase domain maps to 32 to 171 (PLHFAFSSYI…PFVFSPWMVD (140 aa)). Cys69 is an active-site residue. Mg(2+) is bound at residue Cys69. A Mn(2+)-binding site is contributed by His71. Glu89 contacts Mg(2+). Residues Glu119 and Glu121 each coordinate Mn(2+). Glu121 is an active-site residue.

Belongs to the IPP isomerase type 1 family. It depends on Mg(2+) as a cofactor. Requires Mn(2+) as cofactor.

The protein resides in the cytoplasm. The catalysed reaction is isopentenyl diphosphate = dimethylallyl diphosphate. It functions in the pathway isoprenoid biosynthesis; dimethylallyl diphosphate biosynthesis; dimethylallyl diphosphate from isopentenyl diphosphate: step 1/1. Its function is as follows. Catalyzes the 1,3-allylic rearrangement of the homoallylic substrate isopentenyl (IPP) to its highly electrophilic allylic isomer, dimethylallyl diphosphate (DMAPP). The polypeptide is Isopentenyl-diphosphate Delta-isomerase (Corynebacterium efficiens (strain DSM 44549 / YS-314 / AJ 12310 / JCM 11189 / NBRC 100395)).